Here is a 291-residue protein sequence, read N- to C-terminus: uncharacterized protein (291 aa).

Solcar repeat units follow at residues 15 to 93, 104 to 190, and 201 to 287; these read PGPV…IKKS, PRTV…IKQS, and LSTV…VMEI. 6 helical membrane passes run 21-41, 70-90, 108-128, 169-189, 201-221, and 259-280; these read IIAG…AEFA, STVI…FDSI, LAGL…FESI, TVAR…SIKQ, LSTV…VYCT, and FWSG…VFTV.

The protein belongs to the mitochondrial carrier (TC 2.A.29) family.

It is found in the mitochondrion inner membrane. This is an uncharacterized protein from Schizosaccharomyces pombe (strain 972 / ATCC 24843) (Fission yeast).